A 38-amino-acid polypeptide reads, in one-letter code: Large ribosomal subunit protein bL36 (38 aa).

The protein belongs to the bacterial ribosomal protein bL36 family.

The protein is Large ribosomal subunit protein bL36 of Pseudothermotoga lettingae (strain ATCC BAA-301 / DSM 14385 / NBRC 107922 / TMO) (Thermotoga lettingae).